Here is a 309-residue protein sequence, read N- to C-terminus: Taste receptor type 2 member 20 (309 aa).

Topologically, residues 1–6 (MMSFLH) are extracellular. Residues 7–27 (IVFSILVVVAFILGNFANGFI) traverse the membrane as a helical segment. Residues 28 to 46 (ALINFIAWVKRQKISSADQ) lie on the Cytoplasmic side of the membrane. A helical membrane pass occupies residues 47–67 (IIAALAVSRVGLLWVILLHWY). Over 68 to 79 (STVLNPTSSNLK) the chain is Extracellular. The helical transmembrane segment at 80 to 100 (VIIFISNAWAVTNHFSIWLAT) threads the bilayer. Residues 101 to 125 (SLSIFYLLKIVNFSRLIFHHLKRKA) lie on the Cytoplasmic side of the membrane. A helical transmembrane segment spans residues 126–146 (KSVVLVIVLGSLFFLVCHLVM). At 147-178 (KNTYINVWTEECEGNVTWKIKLRNAMHLSNLT) the chain is on the extracellular side. The helical transmembrane segment at 179-199 (VAMLANLIPFTLTLISFLLLI) threads the bilayer. Residues 200-229 (YSLCKHLKKMQLHGKGSQDPSTKIHIKALQ) are Cytoplasmic-facing. The chain crosses the membrane as a helical span at residues 230 to 250 (TVTSFLILLAIYFLCLITSFW). The Extracellular portion of the chain corresponds to 251–259 (NSKMRPKEI). A helical transmembrane segment spans residues 260-280 (VLMLCQAFGIIYPSFHSFILI). At 281-309 (WGNKTLKQTFLSVLWQVTCWAKGQNQSTP) the chain is on the cytoplasmic side.

This sequence belongs to the G-protein coupled receptor T2R family.

It localises to the membrane. Receptor that may play a role in the perception of bitterness and is gustducin-linked. May play a role in sensing the chemical composition of the gastrointestinal content. The activity of this receptor may stimulate alpha gustducin, mediate PLC-beta-2 activation and lead to the gating of TRPM5. The polypeptide is Taste receptor type 2 member 20 (TAS2R20) (Pan paniscus (Pygmy chimpanzee)).